The sequence spans 341 residues: LRP2-binding protein (341 aa).

A TPR repeat occupies 56–89 (VQANFLLGQLFFEEGWYEDALLQFEKVKDEDNQA). Sel1-like repeat units follow at residues 90 to 122 (LYQA…TSDC), 130 to 165 (YAAA…DNGN), 170 to 203 (LKAQ…GNGS), 204 to 239 (LESQ…ERGN), 240 to 271 (VYAQ…SHDN), and 291 to 326 (AIAT…QLDA).

It localises to the cytoplasm. In terms of biological role, may act as an adapter that regulates LRP2 function. This Xenopus laevis (African clawed frog) protein is LRP2-binding protein (lrp2bp).